The primary structure comprises 405 residues: Proline-rich P65 protein (405 aa).

The disordered stretch occupies residues 1–58; sequence MDINKPGWNQSDQQATAYDPNQQQYYGDGSTYYDPDQAVDPNQAYYPDPNTYPDAAAY. Residues 7–25 are compositionally biased toward polar residues; it reads GWNQSDQQATAYDPNQQQY. Tandem repeats lie at residues 40–45, 75–80, 83–87, 89–93, 95–99, 101–105, 107–111, 119–123, 140–145, 148–152, 154–158, and 168–172. The segment at 40-172 is 12 X 5 AA repeats of D-P-N-Q-A-Y; it reads DPNQAYYPDP…YVTSTDPNAY (133 aa).

In terms of processing, the N-terminus is blocked.

The protein resides in the cell membrane. The chain is Proline-rich P65 protein (p65) from Mycoplasma pneumoniae (strain ATCC 29342 / M129 / Subtype 1) (Mycoplasmoides pneumoniae).